Here is a 388-residue protein sequence, read N- to C-terminus: MNLHEYQAKQLFARYGMPAPTGYACTTPREAEEAASKIGAGPWVVKCQVHAGGRGKAGGVKLVNSKEDIRAFAEQWLGKKLVTYQTDVHGQPVHQILVEAATDIDKELYLGAVIDRSSRRVVFMASTEGGVEIEKVAEETPELIHKVALDPLTGPQPYQGRELAFKLGLTGKQVAQFTKIFMGLATLFLERDLAMVEINPLVITKQGDLVCLDGKLGADGNALFRQPELREMRDKSQEDEREAQAAQWELNYVALDGNIGCMVNGAGLAMGTMDIVKLHGGEPANFLDVGGGATKERVTEAFKIILSDDKVKAVFVNIFGGIVRCDLIADGIIGAVEEVGVNVPVVVRLEGNNAELGAKKLADSGLNIIAATSLTDAAQQVVAAVGAK.

In terms of domain architecture, ATP-grasp spans 9–244 (KQLFARYGMP…KSQEDEREAQ (236 aa)). ATP contacts are provided by residues lysine 46, 53–55 (GRG), glutamate 99, threonine 102, and glutamate 107. Mg(2+) contacts are provided by asparagine 199 and aspartate 213. Substrate is bound by residues asparagine 264 and 321 to 323 (GIV).

It belongs to the succinate/malate CoA ligase beta subunit family. In terms of assembly, heterotetramer of two alpha and two beta subunits. It depends on Mg(2+) as a cofactor.

The enzyme catalyses succinate + ATP + CoA = succinyl-CoA + ADP + phosphate. It catalyses the reaction GTP + succinate + CoA = succinyl-CoA + GDP + phosphate. The protein operates within carbohydrate metabolism; tricarboxylic acid cycle; succinate from succinyl-CoA (ligase route): step 1/1. Functionally, succinyl-CoA synthetase functions in the citric acid cycle (TCA), coupling the hydrolysis of succinyl-CoA to the synthesis of either ATP or GTP and thus represents the only step of substrate-level phosphorylation in the TCA. The beta subunit provides nucleotide specificity of the enzyme and binds the substrate succinate, while the binding sites for coenzyme A and phosphate are found in the alpha subunit. The sequence is that of Succinate--CoA ligase [ADP-forming] subunit beta from Yersinia enterocolitica serotype O:8 / biotype 1B (strain NCTC 13174 / 8081).